The chain runs to 704 residues: Arylphorin (704 aa).

The first 16 residues, 1–16 (MKIVLVLAGLIALVQS), serve as a signal peptide directing secretion. N-linked (GlcNAc...) asparagine glycosylation is found at N73, N212, and N360.

This sequence belongs to the hemocyanin family. In terms of assembly, homohexamer of two stacked trimers; disulfide-linked. Post-translationally, glycosylation at Asn-360 is required for proper folding.

Its subcellular location is the secreted. It is found in the extracellular space. In terms of biological role, arylphorin is a larval storage protein (LSP) which may serve as a storage protein used primarily as a source of aromatic amino acids for protein synthesis during metamorphosis. It is a constituent of the sclerotizing system of the cuticle, and serves as a carrier for ecdysteroid hormone. This is Arylphorin from Antheraea pernyi (Chinese oak silk moth).